The following is a 298-amino-acid chain: MQLEKMITEGSNAASAEIDRVSTLEMCRIINDEDKTVPLAVERVLPDIAAAIDVIHAQVSGGGRLIYLGAGTSGRLGILDASECPPTYGVKPGLVVGLIAGGEYAIQHAVEGAEDSREGGVNDLKNIGLTAQDVVVGIAASGRTPYVIAGLEYARQLGCRTVGISCNPGSAVSSTAEFAITPVVGAEVVTGSSRMKAGTAQKLVLNMLSTGLMIKSGKVFGNLMVDVVATNEKLHVRQVNIVKNATGCNAEQAEAALIACERNCKTAIVMVLKNLDADEAKKCLDQHGGFIRKALEKE.

One can recognise an SIS domain in the interval isoleucine 55–lysine 218. The active-site Proton donor is glutamate 83. The active site involves glutamate 114.

This sequence belongs to the GCKR-like family. MurNAc-6-P etherase subfamily. In terms of assembly, homodimer.

The enzyme catalyses N-acetyl-D-muramate 6-phosphate + H2O = N-acetyl-D-glucosamine 6-phosphate + (R)-lactate. The protein operates within amino-sugar metabolism; 1,6-anhydro-N-acetylmuramate degradation. It functions in the pathway amino-sugar metabolism; N-acetylmuramate degradation. Its pathway is cell wall biogenesis; peptidoglycan recycling. Functionally, specifically catalyzes the cleavage of the D-lactyl ether substituent of MurNAc 6-phosphate, producing GlcNAc 6-phosphate and D-lactate. Together with AnmK, is also required for the utilization of anhydro-N-acetylmuramic acid (anhMurNAc) either imported from the medium or derived from its own cell wall murein, and thus plays a role in cell wall recycling. The polypeptide is N-acetylmuramic acid 6-phosphate etherase (Escherichia coli O81 (strain ED1a)).